Here is a 475-residue protein sequence, read N- to C-terminus: Ataxin-10 (475 aa).

Omega-N-methylarginine is present on Arg10. Residues Ser12 and Ser77 each carry the phosphoserine modification. Thr82 bears the Phosphothreonine mark. Residue Ser430 is modified to Phosphoserine.

This sequence belongs to the ataxin-10 family. As to quaternary structure, homooligomer. Interacts with GNB2. Interacts with IQCB1. Interacts with OGT. Polyubiquitinated. In terms of processing, phosphorylation at Ser-12 by AURKB promotes the association of ATXN10 with PLK1. Phosphorylation at Ser-77 and Thr-82 by PLK1 may play a role in the regulation of cytokinesis and may stimulate the proteasome-mediated degradation of ATXN10. Ubiquitous distribution. Markedly increased expression in testis, adrenals, and brain.

It is found in the cytoplasm. It localises to the perinuclear region. The protein resides in the midbody. The protein localises to the cytoskeleton. Its subcellular location is the cilium basal body. It is found in the microtubule organizing center. It localises to the centrosome. The protein resides in the centriole. In terms of biological role, may play a role in the regulation of cytokinesis. May play a role in signaling by stimulating protein glycosylation. Induces neuritogenesis by activating the Ras-MAP kinase pathway and is necessary for the survival of cerebellar neurons. Does not appear to play a major role in ciliogenesis. This chain is Ataxin-10 (Atxn10), found in Rattus norvegicus (Rat).